The primary structure comprises 455 residues: T-box protein VegT-B (455 aa).

A DNA-binding region (T-box) is located at residues 57-230 (LWTQFHQEGT…HNPFAKGFRE (174 aa)). Residues 229-241 (REQERSHKRDDVL) are compositionally biased toward basic and acidic residues. Disordered stretches follow at residues 229–276 (REQE…RIKE) and 295–350 (ANQG…RRLT). Residues 308-326 (GVNQEQQVPTSSSNFYIKS) are compositionally biased toward polar residues.

In terms of assembly, forms a repression complex on the promoters of the nodal/nr1 and siamois genes with the maternal factors tcf7l1/tcf3 and pouf5.1/oct-25. Interacts (via C-terminus) with tcf7l1/tcf3 (via N-terminus). Also interacts with the other POU-domain transcription factors pou5f1.2/oct-91 and pou5f1.3/oct-60. In terms of tissue distribution, maternally localized to the vegetal hemisphere of oocytes. Zygotic expression parallels blastopore formation and shifts from dorsal expression in the marginal zone of late blastula and early gastrula stages to a ventral/lateral expression at later stages. During neurula and tailbud stages, expressed in the posterior and anterior ends of the embryo. During tailbud stages, expressed in a subset of interneurons in the neural tube.

It is found in the nucleus. Its function is as follows. Transcription factor required for both mesoderm and endoderm formation in the embryo; signaling determinants and concentration levels may determine which germ layer is formed. Acts together with beta-catenin to activate genes that are responsible for mesoderm induction including wnt-8, eomes t/bra, siamois, mix1 and sox17. Directly binds to promoter DNA. Patterns the mesoderm along the dorsoventral and posterior axis. Activates siamois gene transcription when alone or in combination with beta-catenin, but inhibits siamois transcription in combination with pou5f1.1/oct-25. The chain is T-box protein VegT-B (vegt-b) from Xenopus laevis (African clawed frog).